We begin with the raw amino-acid sequence, 446 residues long: Phosphoglucosamine mutase (446 aa).

Residue S100 is the Phosphoserine intermediate of the active site. Residues S100, D241, D243, and D245 each contribute to the Mg(2+) site. The residue at position 100 (S100) is a Phosphoserine.

This sequence belongs to the phosphohexose mutase family. The cofactor is Mg(2+). Post-translationally, activated by phosphorylation.

It carries out the reaction alpha-D-glucosamine 1-phosphate = D-glucosamine 6-phosphate. Catalyzes the conversion of glucosamine-6-phosphate to glucosamine-1-phosphate. This is Phosphoglucosamine mutase from Methylorubrum extorquens (strain CM4 / NCIMB 13688) (Methylobacterium extorquens).